The sequence spans 90 residues: UPF0298 protein BLi01717/BL02989 (90 aa).

The protein belongs to the UPF0298 family.

It localises to the cytoplasm. The chain is UPF0298 protein BLi01717/BL02989 from Bacillus licheniformis (strain ATCC 14580 / DSM 13 / JCM 2505 / CCUG 7422 / NBRC 12200 / NCIMB 9375 / NCTC 10341 / NRRL NRS-1264 / Gibson 46).